We begin with the raw amino-acid sequence, 216 residues long: Hydrogenase-4 component E (216 aa).

The Periplasmic segment spans residues 1 to 3 (MTG). Residues 4–24 (SMIVNNLAGLMMLTSLFVISV) traverse the membrane as a helical segment. At 25-38 (KSYRLSCGFYACQS) the chain is on the cytoplasmic side. 2 helical membrane passes run 39–59 (LVLVSIFATLSCLFAAEQLLI) and 60–80 (WSASAFITKVLLVPLIMTYAA). Over 81–92 (RNIPQNIPEKAL) the chain is Cytoplasmic. The helical transmembrane segment at 93–113 (FGPAMMALLAALIVLLCAFVV) threads the bilayer. Residues 114–122 (QPVKLPMAT) lie on the Periplasmic side of the membrane. A helical membrane pass occupies residues 123 to 143 (GLKPALAVALGHFLLGLLCIV). The Cytoplasmic segment spans residues 144-150 (SQRNILR). The helical transmembrane segment at 151 to 171 (QIFGYCLMENGSHLVLALLAW) threads the bilayer. Over 172 to 175 (RAPE) the chain is Periplasmic. The chain crosses the membrane as a helical span at residues 176 to 196 (LVEIGIATDAIFAVIVMVLLA). Residues 197–216 (RKIWRTHGTLDVNNLTALKG) are Cytoplasmic-facing.

Its subcellular location is the cell inner membrane. In Escherichia coli O157:H7, this protein is Hydrogenase-4 component E (hyfE).